The primary structure comprises 823 residues: Ankyrin repeat domain-containing protein 20B (823 aa).

6 ANK repeats span residues 32–65 (SELQ…ARDK), 66–95 (QHRT…QIDI), 99–128 (ENRT…NPNL), 132–161 (YGNT…HIEA), 165–194 (DSNT…STHA), and 198–227 (LRRS…DVFA). 2 disordered regions span residues 302-343 (PEKV…GVED) and 355-401 (VQTL…QLSE). Over residues 372-382 (QERHERSEKKQ) the composition is skewed to basic and acidic residues. Coiled coils occupy residues 431–480 (KKLK…KQLE), 565–724 (EMIT…NNST), and 776–805 (LVLE…EKAE).

In Homo sapiens (Human), this protein is Ankyrin repeat domain-containing protein 20B (ANKRD20A8P).